We begin with the raw amino-acid sequence, 522 residues long: MFFFKGVVAVLSFFSAVNAAPFMKPNNGTRNYIPDSYIVLLKRDISHDDFELHKRWASDVHKRDVAKRGISFSGIGHSWATGSFRGYSGVFSRDTIEEIMKHEHVAHVERDQIGTSQGWVTQSGAPNWGLGRLSNNSPGNTDYTYDENAGGNGVVYVIDSGIDTMHPEFQGRATWGANFIDKNNVDCWNHGTHCAGIIGSATFGVAKLTALIAVKVLDCNGQGPYSAFVAGLHWATKHAQDNGFIGRAIINFSLGGDNSPAVNQALEEAQRAGIFVSAAAGNFGSDAGSITPGGAGLICVIGNSDDRDYRWTGQGPSNFGARVDIFAPGTNILSTIPGGGSGVMTGTSMAAPHVAGQAAILASISGSGFDLGAACAFFKNSASASVKNPGPNTTNKLLVNGANGTKGPKQGENKPNKPPGQDEQPGQNKPPSQNPPPGQNPPPGQNPPPEQPAPSPPANPGDEPNPDGQPYPGDQPNPGDSGPSWWMPSGGLQPPAWWNRRPSFGGWNRPMWWNRPLSVWKL.

The N-terminal stretch at 1–19 is a signal peptide; that stretch reads MFFFKGVVAVLSFFSAVNA. The propeptide occupies 20–117; the sequence is APFMKPNNGT…VERDQIGTSQ (98 aa). The 78-residue stretch at 36 to 113 folds into the Inhibitor I9 domain; that stretch reads SYIVLLKRDI…HVAHVERDQI (78 aa). One can recognise a Peptidase S8 domain in the interval 127-405; it reads NWGLGRLSNN…KLLVNGANGT (279 aa). Catalysis depends on charge relay system residues D159 and H190. N251 is a glycosylation site (N-linked (GlcNAc...) asparagine). Catalysis depends on S348, which acts as the Charge relay system. The span at 384–397 shows a compositional bias: polar residues; sequence ASVKNPGPNTTNKL. The segment at 384–515 is disordered; sequence ASVKNPGPNT…GWNRPMWWNR (132 aa). Residues N392 and N403 are each glycosylated (N-linked (GlcNAc...) asparagine). Positions 432 to 459 are enriched in pro residues; sequence SQNPPPGQNPPPGQNPPPEQPAPSPPAN.

Belongs to the peptidase S8 family.

Its subcellular location is the secreted. In terms of biological role, secreted subtilisin-like serine protease with keratinolytic activity that contributes to pathogenicity. The polypeptide is Subtilisin-like protease 10 (SUB10) (Arthroderma benhamiae (strain ATCC MYA-4681 / CBS 112371) (Trichophyton mentagrophytes)).